Consider the following 237-residue polypeptide: Ribosomal RNA small subunit methyltransferase G (237 aa).

Residues G76, F81, 128–129, and R147 contribute to the S-adenosyl-L-methionine site; that span reads VE.

Belongs to the methyltransferase superfamily. RNA methyltransferase RsmG family.

The protein resides in the cytoplasm. Its function is as follows. Specifically methylates the N7 position of a guanine in 16S rRNA. The polypeptide is Ribosomal RNA small subunit methyltransferase G (Prochlorococcus marinus (strain MIT 9215)).